Reading from the N-terminus, the 27-residue chain is Toxin Bcg III 21.00 (27 aa).

Its subcellular location is the secreted. It localises to the nematocyst. Possible voltage-gated potassium channel (Kv) blocker. In Bunodosoma cangicum (Sea anemone), this protein is Toxin Bcg III 21.00.